A 138-amino-acid polypeptide reads, in one-letter code: Small ribosomal subunit protein uS11c (138 aa).

Residues 1–24 form a disordered region; sequence MIKPIPRISSRRNGRIGSRKTGRR. A compositionally biased stretch (basic residues) spans 9–24; that stretch reads SSRRNGRIGSRKTGRR.

Belongs to the universal ribosomal protein uS11 family. Part of the 30S ribosomal subunit.

Its subcellular location is the plastid. The protein resides in the chloroplast. In Lemna minor (Common duckweed), this protein is Small ribosomal subunit protein uS11c.